The following is a 93-amino-acid chain: MFGLINIGFGNVIAGDRVIAIVNPESAPLKRLKEDAKEEGKLIDATYGRKTRSILITDSNHIILSAIQPETIAQRFIESMVEIEKQLEKIRKG.

It belongs to the RemA family.

This Fervidobacterium nodosum (strain ATCC 35602 / DSM 5306 / Rt17-B1) protein is Putative regulatory protein Fnod_1678.